A 559-amino-acid polypeptide reads, in one-letter code: Glucans biosynthesis protein G (559 aa).

Residues 1 to 37 (MVSLLSCGTSASSHIVKKALTRLSLAMAAGLCFNLAA) form the signal peptide.

The protein belongs to the OpgD/OpgG family.

Its subcellular location is the periplasm. It participates in glycan metabolism; osmoregulated periplasmic glucan (OPG) biosynthesis. In terms of biological role, involved in the biosynthesis of osmoregulated periplasmic glucans (OPGs). This chain is Glucans biosynthesis protein G, found in Shewanella frigidimarina (strain NCIMB 400).